A 335-amino-acid polypeptide reads, in one-letter code: Karyogamy protein KAR4 (335 aa).

The segment at methionine 1 to asparagine 25 is disordered. Over residues isoleucine 16 to asparagine 25 the composition is skewed to polar residues.

Belongs to the MT-A70-like family. In terms of assembly, component of the MIS (mRNA N6-methyladenosine (m6A) methylation) complex, at least composed of IME4, KAR4, MUM2, SLZ1, and VIR1. Interacts with VIR1.

It is found in the nucleus. The protein resides in the cytoplasm. In terms of biological role, component of the MIS complex, a complex that mediates N6-methyladenosine (m6A) methylation of meiotic mRNAs and is required for initiation of meiosis, progression through the meiotic divisions and sporulation. May assist STE12 in the pheromone-dependent expression of KAR3 and CIK1. In Saccharomyces cerevisiae (strain ATCC 204508 / S288c) (Baker's yeast), this protein is Karyogamy protein KAR4 (KAR4).